A 309-amino-acid polypeptide reads, in one-letter code: Probable lipid kinase YegS-like (309 aa).

The region spanning 1–134 (MAPSHWRLIL…VDLLRIDAEH (134 aa)) is the DAGKc domain. Residues threonine 39, 65 to 71 (GDGTLSE), and threonine 96 contribute to the ATP site. Valine 219, aspartate 222, and leucine 224 together coordinate Mg(2+). Catalysis depends on glutamate 280, which acts as the Proton acceptor.

Belongs to the diacylglycerol/lipid kinase family. YegS lipid kinase subfamily. Requires Mg(2+) as cofactor. Ca(2+) is required as a cofactor.

The protein localises to the cytoplasm. In terms of biological role, probably phosphorylates lipids; the in vivo substrate is unknown. In Xanthomonas oryzae pv. oryzae (strain MAFF 311018), this protein is Probable lipid kinase YegS-like.